Reading from the N-terminus, the 200-residue chain is Small ribosomal subunit protein uS4c (200 aa).

The S4 RNA-binding domain occupies 90 to 150 (MRLDNIIFRL…NRKESVIIKN (61 aa)).

Belongs to the universal ribosomal protein uS4 family. As to quaternary structure, part of the 30S ribosomal subunit. Contacts protein S5. The interaction surface between S4 and S5 is involved in control of translational fidelity.

It is found in the plastid. Its subcellular location is the chloroplast. One of the primary rRNA binding proteins, it binds directly to 16S rRNA where it nucleates assembly of the body of the 30S subunit. Functionally, with S5 and S12 plays an important role in translational accuracy. This is Small ribosomal subunit protein uS4c (rps4) from Pellia neesiana (Liverwort).